Here is a 525-residue protein sequence, read N- to C-terminus: Vanin-like protein 2 (525 aa).

The N-terminal stretch at 1-27 (MAKNYWGFFLFCLALGLMLNLSQQASL) is a signal peptide. 2 N-linked (GlcNAc...) asparagine glycosylation sites follow: Asn-20 and Asn-61. Positions 33 to 303 (YTAGVVEFEP…RSIYVARVPK (271 aa)) constitute a CN hydrolase domain. Residue Glu-72 is the Proton acceptor of the active site. Residues Asn-99, Asn-116, and Asn-124 are each glycosylated (N-linked (GlcNAc...) asparagine). The Proton donor role is filled by Lys-167. Residue Asn-176 is glycosylated (N-linked (GlcNAc...) asparagine). Cys-199 functions as the Nucleophile in the catalytic mechanism. 3 N-linked (GlcNAc...) asparagine glycosylation sites follow: Asn-333, Asn-348, and Asn-375.

This sequence belongs to the carbon-nitrogen hydrolase superfamily. BTD/VNN family. In terms of tissue distribution, expressed in third instar larvae.

The protein resides in the secreted. This is Vanin-like protein 2 from Drosophila melanogaster (Fruit fly).